A 155-amino-acid chain; its full sequence is Small ribosomal subunit protein uS7cz/uS7cy (155 aa).

This sequence belongs to the universal ribosomal protein uS7 family. Part of the 30S ribosomal subunit.

It is found in the plastid. Functionally, one of the primary rRNA binding proteins, it binds directly to 16S rRNA where it nucleates assembly of the head domain of the 30S subunit. This is Small ribosomal subunit protein uS7cz/uS7cy (rps7-A) from Epifagus virginiana (Beechdrops).